Here is a 536-residue protein sequence, read N- to C-terminus: Zinc finger protein 394 (536 aa).

Positions alanine 18–lysine 45 are disordered. Lysine 20 is covalently cross-linked (Glycyl lysine isopeptide (Lys-Gly) (interchain with G-Cter in SUMO2)). A compositionally biased stretch (polar residues) spans proline 26–glutamate 41. The region spanning arginine 44–leucine 126 is the SCAN box domain. The 62-residue stretch at alanine 135–serine 196 folds into the KRAB domain. Residues lysine 207 and lysine 260 each participate in a glycyl lysine isopeptide (Lys-Gly) (interchain with G-Cter in SUMO2) cross-link. C2H2-type zinc fingers lie at residues tyrosine 328–histidine 350, tyrosine 356–histidine 378, and tyrosine 384–histidine 406. The C2H2-type 4; atypical zinc-finger motif lies at cysteine 412–histidine 433. Lysine 413 is covalently cross-linked (Glycyl lysine isopeptide (Lys-Gly) (interchain with G-Cter in SUMO2)). C2H2-type zinc fingers lie at residues histidine 439 to histidine 461, tyrosine 467 to histidine 489, and tyrosine 495 to histidine 517.

It belongs to the krueppel C2H2-type zinc-finger protein family.

It localises to the nucleus. Its function is as follows. May be involved in transcriptional regulation. The polypeptide is Zinc finger protein 394 (Znf394) (Rattus norvegicus (Rat)).